A 57-amino-acid chain; its full sequence is Large ribosomal subunit protein bL32 (57 aa).

The segment covering 1 to 19 (MATPKRRMSRANTRSRRSQ) has biased composition (basic residues). Residues 1-21 (MATPKRRMSRANTRSRRSQWK) are disordered.

This sequence belongs to the bacterial ribosomal protein bL32 family.

The chain is Large ribosomal subunit protein bL32 from Mycobacterium ulcerans (strain Agy99).